A 91-amino-acid polypeptide reads, in one-letter code: Probable Fe(2+)-trafficking protein (91 aa).

Belongs to the Fe(2+)-trafficking protein family. In terms of assembly, monomer.

Functionally, could be a mediator in iron transactions between iron acquisition and iron-requiring processes, such as synthesis and/or repair of Fe-S clusters in biosynthetic enzymes. The sequence is that of Probable Fe(2+)-trafficking protein from Cronobacter sakazakii (strain ATCC BAA-894) (Enterobacter sakazakii).